The following is a 185-amino-acid chain: uncharacterized protein (185 aa).

3 consecutive transmembrane segments (helical) span residues leucine 32–phenylalanine 52, leucine 66–valine 86, and isoleucine 155–valine 175.

The protein localises to the cell membrane. This is an uncharacterized protein from Bacillus subtilis (strain 168).